A 237-amino-acid chain; its full sequence is 7-cyano-7-deazaguanine synthase (237 aa).

9-19 (YSGGLDSTTCL) provides a ligand contact to ATP. Residues C189, C199, C202, and C205 each contribute to the Zn(2+) site.

This sequence belongs to the QueC family. The cofactor is Zn(2+).

The catalysed reaction is 7-carboxy-7-deazaguanine + NH4(+) + ATP = 7-cyano-7-deazaguanine + ADP + phosphate + H2O + H(+). Its pathway is purine metabolism; 7-cyano-7-deazaguanine biosynthesis. Functionally, catalyzes the ATP-dependent conversion of 7-carboxy-7-deazaguanine (CDG) to 7-cyano-7-deazaguanine (preQ(0)). This is 7-cyano-7-deazaguanine synthase from Geobacter sulfurreducens (strain ATCC 51573 / DSM 12127 / PCA).